The following is a 541-amino-acid chain: Glucose-6-phosphate isomerase (541 aa).

Catalysis depends on E346, which acts as the Proton donor. Residues H377 and K506 contribute to the active site.

It belongs to the GPI family.

It is found in the cytoplasm. The enzyme catalyses alpha-D-glucose 6-phosphate = beta-D-fructose 6-phosphate. It functions in the pathway carbohydrate biosynthesis; gluconeogenesis. It participates in carbohydrate degradation; glycolysis; D-glyceraldehyde 3-phosphate and glycerone phosphate from D-glucose: step 2/4. Catalyzes the reversible isomerization of glucose-6-phosphate to fructose-6-phosphate. The sequence is that of Glucose-6-phosphate isomerase from Rhizobium etli (strain ATCC 51251 / DSM 11541 / JCM 21823 / NBRC 15573 / CFN 42).